We begin with the raw amino-acid sequence, 702 residues long: Elongation factor G (702 aa).

A tr-type G domain is found at 8–290 (ERYRNIGISA…GVVEYLPSPV (283 aa)). Residues 17–24 (AHIDAGKT), 88–92 (DTPGH), and 142–145 (NKMD) each bind GTP.

It belongs to the TRAFAC class translation factor GTPase superfamily. Classic translation factor GTPase family. EF-G/EF-2 subfamily.

The protein localises to the cytoplasm. Functionally, catalyzes the GTP-dependent ribosomal translocation step during translation elongation. During this step, the ribosome changes from the pre-translocational (PRE) to the post-translocational (POST) state as the newly formed A-site-bound peptidyl-tRNA and P-site-bound deacylated tRNA move to the P and E sites, respectively. Catalyzes the coordinated movement of the two tRNA molecules, the mRNA and conformational changes in the ribosome. This chain is Elongation factor G, found in Janthinobacterium sp. (strain Marseille) (Minibacterium massiliensis).